The chain runs to 925 residues: Protein translocase subunit SecA (925 aa).

Residues Q87, G105–T109, and D515 each bind ATP. Zn(2+)-binding residues include C909, C911, C920, and H921.

This sequence belongs to the SecA family. As to quaternary structure, monomer and homodimer. Part of the essential Sec protein translocation apparatus which comprises SecA, SecYEG and auxiliary proteins SecDF-YajC and YidC. Requires Zn(2+) as cofactor.

The protein resides in the cell inner membrane. It localises to the cytoplasm. It carries out the reaction ATP + H2O + cellular proteinSide 1 = ADP + phosphate + cellular proteinSide 2.. Functionally, part of the Sec protein translocase complex. Interacts with the SecYEG preprotein conducting channel. Has a central role in coupling the hydrolysis of ATP to the transfer of proteins into and across the cell membrane, serving both as a receptor for the preprotein-SecB complex and as an ATP-driven molecular motor driving the stepwise translocation of polypeptide chains across the membrane. In Cupriavidus taiwanensis (strain DSM 17343 / BCRC 17206 / CCUG 44338 / CIP 107171 / LMG 19424 / R1) (Ralstonia taiwanensis (strain LMG 19424)), this protein is Protein translocase subunit SecA.